A 194-amino-acid chain; its full sequence is Large ribosomal subunit protein bL25B (194 aa).

This sequence belongs to the bacterial ribosomal protein bL25 family. CTC subfamily. Part of the 50S ribosomal subunit; part of the 5S rRNA/L5/L18/L25 subcomplex. Contacts the 5S rRNA. Binds to the 5S rRNA independently of L5 and L18.

This is one of the proteins that binds to the 5S RNA in the ribosome where it forms part of the central protuberance. This is Large ribosomal subunit protein bL25B from Symbiobacterium thermophilum (strain DSM 24528 / JCM 14929 / IAM 14863 / T).